A 390-amino-acid polypeptide reads, in one-letter code: Tryptophan synthase beta chain (390 aa).

Residue lysine 90 is modified to N6-(pyridoxal phosphate)lysine.

Belongs to the TrpB family. Tetramer of two alpha and two beta chains. The cofactor is pyridoxal 5'-phosphate.

The enzyme catalyses (1S,2R)-1-C-(indol-3-yl)glycerol 3-phosphate + L-serine = D-glyceraldehyde 3-phosphate + L-tryptophan + H2O. It functions in the pathway amino-acid biosynthesis; L-tryptophan biosynthesis; L-tryptophan from chorismate: step 5/5. In terms of biological role, the beta subunit is responsible for the synthesis of L-tryptophan from indole and L-serine. The chain is Tryptophan synthase beta chain from Bacteroides fragilis (strain ATCC 25285 / DSM 2151 / CCUG 4856 / JCM 11019 / LMG 10263 / NCTC 9343 / Onslow / VPI 2553 / EN-2).